A 405-amino-acid polypeptide reads, in one-letter code: Adenylosuccinate synthetase (405 aa).

Residues 12–18 (GDEGKGK) and 40–42 (GHT) each bind GTP. Asp13 serves as the catalytic Proton acceptor. Residues Asp13 and Gly40 each contribute to the Mg(2+) site. IMP contacts are provided by residues 13 to 16 (DEGK), 38 to 41 (NAGH), Thr121, Arg135, Gln213, Thr228, and Arg297. His41 (proton donor) is an active-site residue. A substrate-binding site is contributed by 293-299 (TTTGRPR). GTP contacts are provided by residues Arg299, 325–327 (KMD), and 390–392 (SAG).

It belongs to the adenylosuccinate synthetase family. In terms of assembly, homodimer. It depends on Mg(2+) as a cofactor.

The protein localises to the cytoplasm. The enzyme catalyses IMP + L-aspartate + GTP = N(6)-(1,2-dicarboxyethyl)-AMP + GDP + phosphate + 2 H(+). It participates in purine metabolism; AMP biosynthesis via de novo pathway; AMP from IMP: step 1/2. In terms of biological role, plays an important role in the de novo pathway of purine nucleotide biosynthesis. Catalyzes the first committed step in the biosynthesis of AMP from IMP. In Deinococcus radiodurans (strain ATCC 13939 / DSM 20539 / JCM 16871 / CCUG 27074 / LMG 4051 / NBRC 15346 / NCIMB 9279 / VKM B-1422 / R1), this protein is Adenylosuccinate synthetase.